The following is a 318-amino-acid chain: Melanocyte-stimulating hormone receptor (318 aa).

Residues 1-37 (MPMQGAQRKLLGSLNSTPTATSNLGLAANRTGAPCLE) are Extracellular-facing. A glycan (N-linked (GlcNAc...) asparagine) is linked at Asn29. The chain crosses the membrane as a helical span at residues 38–63 (LPIPNGLFLSLGLVSLVENVLVVAAI). Topologically, residues 64–72 (AKNRNLHSS) are cytoplasmic. Residues 73–93 (MYCFICCLALSDLLVSGSNML) form a helical membrane-spanning segment. Residues 94–118 (ETAVILLLEAGVLATRASVVQQLHN) lie on the Extracellular side of the membrane. A helical transmembrane segment spans residues 119-140 (TIDVLTCSSMLCSLCFLGAIAV). Residues 141 to 163 (DRYISIFYALRYHSIMTLPRAQR) lie on the Cytoplasmic side of the membrane. The chain crosses the membrane as a helical span at residues 164 to 183 (AVAAIWVASVLSSTLFITYY). Residues 184–191 (DHAAVLLC) are Extracellular-facing. The helical transmembrane segment at 192-211 (LMVFFLAMLVLMAVLYVHML) threads the bilayer. Over 212–240 (ARARQHAQGIIRLHKRQPPAHKGFGLRGA) the chain is Cytoplasmic. The helical transmembrane segment at 241–266 (ATLTILLGIFFLCWGPFFLCLTLVVF) threads the bilayer. Residues 267–279 (CPQHLTCNCIFKN) lie on the Extracellular side of the membrane. A helical membrane pass occupies residues 280–300 (FKVFLTLIICNTIIDPLIYAF). At 301 to 317 (RSQELRRMLKEVLGRGR) the chain is on the cytoplasmic side.

The protein belongs to the G-protein coupled receptor 1 family. As to quaternary structure, interacts with MGRN1, but does not undergo MGRN1-mediated ubiquitination; this interaction competes with GNAS-binding and thus inhibits agonist-induced cAMP production. Interacts with OPN3; the interaction results in a decrease in MC1R-mediated cAMP signaling and ultimately a decrease in melanin production in melanocytes.

It localises to the cell membrane. Its function is as follows. Receptor for MSH (alpha, beta and gamma) and ACTH. The activity of this receptor is mediated by G proteins which activate adenylate cyclase. Mediates melanogenesis, the production of eumelanin (black/brown) and phaeomelanin (red/yellow), via regulation of cAMP signaling in melanocytes. This is Melanocyte-stimulating hormone receptor (MC1R) from Leontopithecus rosalia (Golden lion tamarin).